The primary structure comprises 379 residues: Succinyl-diaminopimelate desuccinylase (379 aa).

H68 contacts Zn(2+). D70 is an active-site residue. Zn(2+) is bound at residue D101. The active-site Proton acceptor is the E135. Positions 136, 164, and 350 each coordinate Zn(2+).

This sequence belongs to the peptidase M20A family. DapE subfamily. In terms of assembly, homodimer. Zn(2+) serves as cofactor. It depends on Co(2+) as a cofactor.

It carries out the reaction N-succinyl-(2S,6S)-2,6-diaminopimelate + H2O = (2S,6S)-2,6-diaminopimelate + succinate. Its pathway is amino-acid biosynthesis; L-lysine biosynthesis via DAP pathway; LL-2,6-diaminopimelate from (S)-tetrahydrodipicolinate (succinylase route): step 3/3. Catalyzes the hydrolysis of N-succinyl-L,L-diaminopimelic acid (SDAP), forming succinate and LL-2,6-diaminopimelate (DAP), an intermediate involved in the bacterial biosynthesis of lysine and meso-diaminopimelic acid, an essential component of bacterial cell walls. The chain is Succinyl-diaminopimelate desuccinylase from Bordetella pertussis (strain Tohama I / ATCC BAA-589 / NCTC 13251).